Reading from the N-terminus, the 203-residue chain is Flagellar transcriptional regulator FlhC (203 aa).

The Zn(2+) site is built by Cys161, Cys164, Cys181, and Cys184.

It belongs to the FlhC family. As to quaternary structure, heterohexamer composed of two FlhC and four FlhD subunits. Each FlhC binds a FlhD dimer, forming a heterotrimer, and a hexamer assembles by dimerization of two heterotrimers. It depends on Zn(2+) as a cofactor.

The protein localises to the cytoplasm. In terms of biological role, functions in complex with FlhD as a master transcriptional regulator that regulates transcription of several flagellar and non-flagellar operons by binding to their promoter region. Activates expression of class 2 flagellar genes, including fliA, which is a flagellum-specific sigma factor that turns on the class 3 genes. Also regulates genes whose products function in a variety of physiological pathways. The sequence is that of Flagellar transcriptional regulator FlhC from Cupriavidus necator (strain ATCC 17699 / DSM 428 / KCTC 22496 / NCIMB 10442 / H16 / Stanier 337) (Ralstonia eutropha).